A 691-amino-acid chain; its full sequence is Ribonuclease J (691 aa).

Residues 1–89 are disordered; it reads MTDNNHYENN…TRNYAKEELD (89 aa). The segment at 1–132 is loss of region decreases protein stability, still able to interact with RhpA, but has decreased RNase activity even on ssRNA; that stretch reads MTDNNHYENN…KIQVEHLNPH (132 aa). The span at 10-19 shows a compositional bias: low complexity; it reads NESNENSSEN. Residues 41–57 are compositionally biased toward basic and acidic residues; that stretch reads RENAQKNGESSHHEAPS. Over residues 58-82 the composition is skewed to basic residues; it reads HHKKEHRPNKKPNNHHKQKHAKTRN. N6-acetyllysine is present on residues K134 and K140. Zn(2+) is bound by residues H208, H210, D212, H213, H277, and D299. N6-acetyllysine occurs at positions 323, 337, and 397. 500 to 504 contributes to the substrate binding site; sequence HVSGH. Residue K511 is modified to N6-acetyllysine. Residue H526 coordinates Zn(2+). N6-acetyllysine occurs at positions 547, 634, and 649.

This sequence belongs to the metallo-beta-lactamase superfamily. RNA-metabolizing metallo-beta-lactamase-like family. Bacterial RNase J subfamily. In terms of assembly, homodimer. Homotetramer; dimer of homodimers. Interacts with RNA helicase RphA, might be a member of a minimal RNA degradosome complex. Zn(2+) serves as cofactor. Acetylated on nine lysine residues. Some of the residues are acetylated by multiple different mechanisms. RimL is partially responsible for the acetylation of Lys-323, Lys-397 and Lys-649. HPB8_1270 homolog is partially responsible for the acetylation of Lys-323, Lys-397, Lys-511 and Lys-649. Acetyl-phosphate-mediated non-enzymatic acetylation pathway takes part in the acetylation of Lys-134, Lys-323, Lys-397, Lys-511 and Lys-649. Acetylation of the remaining residues Lys-140, Lys-337, Lys-547 and Lys-634 occurs by a yet undetermined mechanism. Acetylation on a number of these residues is important for growth regulation and proper cell morphology.

The protein localises to the cytoplasm. With respect to regulation, catalytic activity is regulated by the balance between homodimers and homotetramers, with homotetramers being the active forms of this enzyme. Acetylation allosterically regulates the homooligomerization state and hence the catalytic activity. Its function is as follows. An RNase that has 5'-3' exoribonuclease and endoribonuclease activity. Degrades 5'-monophosphorylated ssRNA and dsRNA, considerably more active on ssRNA. Association with RhpA significantly increases the dsRNase activity. Degrades RNA substrate with hairpin structures at both ends with low activity, but presence of RhpA significantly increases the activity on this substrate. Stimulates ATPase activity of RNA helicase RhpA. Involved in stabilization of mRNA but apparently not rRNA. This chain is Ribonuclease J, found in Helicobacter pylori (strain B128).